We begin with the raw amino-acid sequence, 105 residues long: MVSMQNDRIRIKLKAYDYRILDKAVAEIVDTARNTGAGVAGPIPLPTDIHKVTVNRSVHVDKKSREQFEMRVHKRLLDIMEPTQQTVDALGKLSLPAGVDVEIKL.

Belongs to the universal ribosomal protein uS10 family. Part of the 30S ribosomal subunit.

Functionally, involved in the binding of tRNA to the ribosomes. In Solidesulfovibrio magneticus (strain ATCC 700980 / DSM 13731 / RS-1) (Desulfovibrio magneticus), this protein is Small ribosomal subunit protein uS10.